The chain runs to 428 residues: Probable glucose-6-phosphate isomerase (428 aa).

Glu269 acts as the Proton donor in catalysis. Residues His290 and Lys401 contribute to the active site.

It belongs to the GPI family.

It is found in the cytoplasm. The catalysed reaction is alpha-D-glucose 6-phosphate = beta-D-fructose 6-phosphate. It participates in carbohydrate biosynthesis; gluconeogenesis. Its pathway is carbohydrate degradation; glycolysis; D-glyceraldehyde 3-phosphate and glycerone phosphate from D-glucose: step 2/4. Catalyzes the reversible isomerization of glucose-6-phosphate to fructose-6-phosphate. The protein is Probable glucose-6-phosphate isomerase of Natronomonas pharaonis (strain ATCC 35678 / DSM 2160 / CIP 103997 / JCM 8858 / NBRC 14720 / NCIMB 2260 / Gabara) (Halobacterium pharaonis).